A 270-amino-acid polypeptide reads, in one-letter code: LIM zinc-binding domain-containing Nebulette (270 aa).

The region spanning 3–63 (PQCARCGKVV…NAHYPKQSFT (61 aa)) is the LIM zinc-binding domain. Residues 61 to 95 (SFTTVADTPENLRLKQQSELQSQVKYKRDFEESKG) form a Nebulin 1 repeat. The residue at position 96 (Arg96) is an Omega-N-methylarginine. Residues 97–131 (GFSIVTDTPELQRLKRTQEQISNVKYHEDFEKTKG) form a Nebulin 2 repeat. An Omega-N-methylarginine modification is found at Arg132. A Nebulin 3 repeat occupies 133–159 (GFTPVVDDPVTERVRKSTQVVSDAAYK). Residue Thr135 is modified to Phosphothreonine. Positions 210–270 (AHLRTYRAMY…LPANYIEFVN (61 aa)) constitute an SH3 domain. A Phosphoserine modification is found at Ser230.

It is found in the cytoplasm. Its function is as follows. Binds to actin and plays an important role in the assembly of the Z-disk. Isoform 2 might play a role in the assembly of focal adhesion. The protein is LIM zinc-binding domain-containing Nebulette (Nebl) of Mus musculus (Mouse).